We begin with the raw amino-acid sequence, 728 residues long: Methionine--tRNA ligase (728 aa).

Residues 13-23 (PYANGSIHLGH) carry the 'HIGH' region motif. Residues cysteine 144, cysteine 147, cysteine 157, and cysteine 160 each contribute to the Zn(2+) site. The short motif at 348–352 (KMSKS) is the 'KMSKS' region element. Lysine 351 contributes to the ATP binding site. Residues 585-620 (LAPAKSQQVAQAVETMEKNSSTTPAPAKEGEAGQAS) form a disordered region. The 101-residue stretch at 628 to 728 (DFGKIDLRVA…EGARPGMKVK (101 aa)) folds into the tRNA-binding domain.

Belongs to the class-I aminoacyl-tRNA synthetase family. MetG type 1 subfamily. In terms of assembly, homodimer. Zn(2+) serves as cofactor.

It localises to the cytoplasm. It catalyses the reaction tRNA(Met) + L-methionine + ATP = L-methionyl-tRNA(Met) + AMP + diphosphate. Its function is as follows. Is required not only for elongation of protein synthesis but also for the initiation of all mRNA translation through initiator tRNA(fMet) aminoacylation. The polypeptide is Methionine--tRNA ligase (Nitrosospira multiformis (strain ATCC 25196 / NCIMB 11849 / C 71)).